The chain runs to 31 residues: Photosystem II reaction center protein T (31 aa).

Residues 3-23 traverse the membrane as a helical segment; that stretch reads SAAYILVLALALGVIFFAIAF.

This sequence belongs to the PsbT family. As to quaternary structure, PSII is composed of 1 copy each of membrane proteins PsbA, PsbB, PsbC, PsbD, PsbE, PsbF, PsbH, PsbI, PsbJ, PsbK, PsbL, PsbM, PsbT, PsbX, PsbY, PsbZ, Psb30/Ycf12, peripheral proteins PsbO, CyanoQ (PsbQ), PsbU, PsbV and a large number of cofactors. It forms dimeric complexes.

Its subcellular location is the cellular thylakoid membrane. Its function is as follows. Found at the monomer-monomer interface of the photosystem II (PS II) dimer, plays a role in assembly and dimerization of PSII. PSII is a light-driven water plastoquinone oxidoreductase, using light energy to abstract electrons from H(2)O, generating a proton gradient subsequently used for ATP formation. This chain is Photosystem II reaction center protein T, found in Trichodesmium erythraeum (strain IMS101).